The following is a 119-amino-acid chain: Vitelline membrane protein Vm34Ca (119 aa).

The N-terminal stretch at 1 to 19 (MKCIAIVSTICLLAAFVAA) is a signal peptide. The region spanning 69-106 (SIPAPPCPKNYLFSCQPNLAPVPCSAPAPSYGSAGAYS) is the VM domain.

It belongs to the vitelline membrane protein family. As to expression, follicle cells.

Its subcellular location is the secreted. In terms of biological role, major early eggshell protein. The chain is Vitelline membrane protein Vm34Ca (Vm34Ca) from Drosophila melanogaster (Fruit fly).